Consider the following 170-residue polypeptide: Photosystem I assembly protein Ycf3 (170 aa).

3 TPR repeats span residues 35–68, 72–105, and 120–153; these read AFTY…EIDP, SYIL…NPFL, and GEQA…TPGN.

Belongs to the Ycf3 family.

It is found in the plastid. The protein localises to the chloroplast thylakoid membrane. Functionally, essential for the assembly of the photosystem I (PSI) complex. May act as a chaperone-like factor to guide the assembly of the PSI subunits. This chain is Photosystem I assembly protein Ycf3, found in Agrostis stolonifera (Creeping bentgrass).